Consider the following 23-residue polypeptide: Hongotoxin-4 (23 aa).

Belongs to the short scorpion toxin superfamily. Potassium channel inhibitor family. Alpha-KTx 02 subfamily. Expressed by the venom gland.

The protein localises to the secreted. Functionally, potent selective inhibitor of Kv1/KCNA voltage-gated potassium channels. In Centruroides limbatus (Bark scorpion), this protein is Hongotoxin-4.